The chain runs to 351 residues: AA9 family lytic polysaccharide monooxygenase A (351 aa).

The signal sequence occupies residues 1-20 (MSNKAATLLAALSGAALVAA). The Cu(2+) site is built by His-21 and His-107. The cysteines at positions 76 and 196 are disulfide-linked. Residues His-182 and Gln-191 each coordinate O2. Tyr-193 is a Cu(2+) binding site. The 37-residue stretch at 315–351 (GVAPKWGQCGGNGWTGPTVCASGSTCTVLNPYYSQCI) folds into the CBM1 domain.

It belongs to the polysaccharide monooxygenase AA9 family. Requires Cu(2+) as cofactor.

It is found in the secreted. The enzyme catalyses [(1-&gt;4)-beta-D-glucosyl]n+m + reduced acceptor + O2 = 4-dehydro-beta-D-glucosyl-[(1-&gt;4)-beta-D-glucosyl]n-1 + [(1-&gt;4)-beta-D-glucosyl]m + acceptor + H2O.. In terms of biological role, lytic polysaccharide monooxygenase (LPMO) that depolymerizes crystalline and amorphous polysaccharides via the oxidation of scissile alpha- or beta-(1-4)-glycosidic bonds, yielding C1 and C4 oxidation products. Catalysis by LPMOs requires the reduction of the active-site copper from Cu(II) to Cu(I) by a reducing agent and H(2)O(2) or O(2) as a cosubstrate. The protein is AA9 family lytic polysaccharide monooxygenase A of Podospora anserina (strain S / ATCC MYA-4624 / DSM 980 / FGSC 10383) (Pleurage anserina).